A 249-amino-acid chain; its full sequence is Large ribosomal subunit protein uL16m (249 aa).

Belongs to the universal ribosomal protein uL16 family. As to quaternary structure, component of the mitochondrial large ribosomal subunit (mt-LSU). Mature N.crassa 74S mitochondrial ribosomes consist of a small (37S) and a large (54S) subunit. The 37S small subunit contains a 16S ribosomal RNA (16S mt-rRNA) and 32 different proteins. The 54S large subunit contains a 23S rRNA (23S mt-rRNA) and 42 different proteins.

Its subcellular location is the mitochondrion. Its function is as follows. Component of the mitochondrial ribosome (mitoribosome), a dedicated translation machinery responsible for the synthesis of mitochondrial genome-encoded proteins, including at least some of the essential transmembrane subunits of the mitochondrial respiratory chain. The mitoribosomes are attached to the mitochondrial inner membrane and translation products are cotranslationally integrated into the membrane. The protein is Large ribosomal subunit protein uL16m (mrpl16) of Neurospora crassa (strain ATCC 24698 / 74-OR23-1A / CBS 708.71 / DSM 1257 / FGSC 987).